A 134-amino-acid chain; its full sequence is Small ribosomal subunit protein bS16 (134 aa).

The tract at residues 105–134 is disordered; it reads EAERRQKRLTAKTRRRQAKKAAEAAGSAEG. Basic residues predominate over residues 109 to 123; sequence RQKRLTAKTRRRQAK.

The protein belongs to the bacterial ribosomal protein bS16 family.

This chain is Small ribosomal subunit protein bS16, found in Chlorobaculum parvum (strain DSM 263 / NCIMB 8327) (Chlorobium vibrioforme subsp. thiosulfatophilum).